The following is a 178-amino-acid chain: Oligoribonuclease (178 aa).

Positions 7–168 constitute an Exonuclease domain; sequence LIWIDLEMTG…DDIRESIAEL (162 aa). Residue Tyr128 is part of the active site.

Belongs to the oligoribonuclease family.

The protein resides in the cytoplasm. 3'-to-5' exoribonuclease specific for small oligoribonucleotides. In Francisella tularensis subsp. holarctica (strain FTNF002-00 / FTA), this protein is Oligoribonuclease.